The sequence spans 5641 residues: Cyclochlorotine synthetase (5641 aa).

The disordered stretch occupies residues 95–124; sequence PENLNGHLIGSTNGHKKQWENDSADDKRGQ. A compositionally biased stretch (basic and acidic residues) spans 111-124; it reads KQWENDSADDKRGQ. Residues 217–622 form an adenylation (A) domain 1 region; sequence FTENVQRYPT…GRRDTQVKIR (406 aa). Residues 816–892 enclose the Carrier 1 domain; that stretch reads TEEEYKIQTL…DLVSNCKMSA (77 aa). The thiolation (T) domain 1 stretch occupies residues 821–889; sequence KIQTLKEIWS…QLSDLVSNCK (69 aa). Ser853 is modified (O-(pantetheine 4'-phosphoryl)serine). The tract at residues 926–1333 is condensation (C) domain 1; that stretch reads EDVYPCTPLQ…AHVAEQIGQP (408 aa). The interval 1390 to 1768 is adenylation (A) domain 2; that stretch reads DGNLTFEELN…ISRATTQIKI (379 aa). The Carrier 2 domain maps to 1902–1978; it reads IELSEKQENM…QLVMIATELT (77 aa). The thiolation (T) domain 2 stretch occupies residues 1907–1975; that stretch reads KQENMARLWA…RFDQLVMIAT (69 aa). The residue at position 1939 (Ser1939) is an O-(pantetheine 4'-phosphoryl)serine. The condensation (C) domain 2 stretch occupies residues 2022–2438; sequence DIYACTPFQE…DLASEQDLAK (417 aa). The segment at 2459 to 2859 is adenylation (A) domain 3; sequence AEKARQHPNK…GRADTQVKLR (401 aa). Residues 2976–3052 enclose the Carrier 3 domain; that stretch reads GPLTEMETTL…GMAIKIQPIH (77 aa). The tract at residues 2977 to 3049 is thiolation (T) domain 3; it reads PLTEMETTLA…NLAGMAIKIQ (73 aa). At Ser3013 the chain carries O-(pantetheine 4'-phosphoryl)serine. Residues 3089–3482 form a condensation (C) domain 3 region; that stretch reads DIYPCTPLQV…LETVLSAFST (394 aa). The adenylation (A) domain 4 stretch occupies residues 3523–3873; it reads VQRAPDKVAI…IARKDLQVKL (351 aa). In terms of domain architecture, Carrier 4 spans 4005–4081; the sequence is IPSTPTEMKM…ELATKIAPRI (77 aa). Residues 4010–4078 are thiolation (T) domain 4; it reads TEMKMQQLWA…RLSELATKIA (69 aa). Residue Ser4042 is modified to O-(pantetheine 4'-phosphoryl)serine. Residues 4123 to 4549 form a condensation (C) domain 4 region; that stretch reads KDVYPCTPLQ…QSLDSLSQQD (427 aa). The interval 4574-4982 is adenylation (A) domain 5; the sequence is QEIAGRHPDA…GRIGTDIKLR (409 aa). The Carrier 5 domain occupies 5118–5194; that stretch reads PPSTQEEKVI…SLAEKISWES (77 aa). The interval 5123–5191 is thiolation (T) domain 5; sequence EEKVIAALWA…KLASLAEKIS (69 aa). Position 5155 is an O-(pantetheine 4'-phosphoryl)serine (Ser5155). The tract at residues 5260 to 5556 is condensation (C) domain 5; the sequence is AYLDIGPDVQ…DKCTTCVSGS (297 aa).

The protein belongs to the NRP synthetase family.

Its pathway is mycotoxin biosynthesis. Functionally, nonribosomal peptide synthetase; part of the gene cluster that mediates the biosynthesis of the mycotoxin cyclochlorotine, a hepatotoxic and carcinogenic cyclic chlorinated pentapeptide. Within the pathway, The NRPS cctN initially catalyzes the condensation of L-serine (Ser), Pro, L-2-aminobutyrate (2Abu), Ser, and beta-Phe in this order. During the chain elongation, side-chain hydroxy group of Ser4 would be used as a nucleophile, giving isocyclotine as a product of terminal condensation-like (CT) domain-catalyzed cyclization. After the dichlorination of Pro2 catalyzed by cctP2 to produce isocyclochlorotine, the cctO-mediated transacylation of isocyclochlorotine can furnish cyclochlorotine. The subsequent hydroxylation of cyclochlorotine by cctR yields hydroxycyclochlorotine as the final product. CctP1 probably acts as a phenylalanine aminomutase and provides the uncommon building block beta-Phe. Furthermore, 2Abu can be synthesized from threonine by one of the threonine dehydratases and transaminases localized outside of the cluster. The functions of the remaining proteins encoded by the cluster, cctM and cctT, have not been identified yet. This Talaromyces islandicus (Penicillium islandicum) protein is Cyclochlorotine synthetase.